The chain runs to 230 residues: Flagellar L-ring protein (230 aa).

The signal sequence occupies residues 1–26 (MKQVRLLPSATVRAACAVAVAAFAAG). Cys-27 is lipidated: N-palmitoyl cysteine. The S-diacylglycerol cysteine moiety is linked to residue Cys-27.

Belongs to the FlgH family. The basal body constitutes a major portion of the flagellar organelle and consists of four rings (L,P,S, and M) mounted on a central rod.

Its subcellular location is the cell outer membrane. The protein localises to the bacterial flagellum basal body. In terms of biological role, assembles around the rod to form the L-ring and probably protects the motor/basal body from shearing forces during rotation. The sequence is that of Flagellar L-ring protein from Burkholderia lata (strain ATCC 17760 / DSM 23089 / LMG 22485 / NCIMB 9086 / R18194 / 383).